The sequence spans 369 residues: Phenylalanine--tRNA ligase alpha subunit (369 aa).

Residue glutamate 269 coordinates Mg(2+).

This sequence belongs to the class-II aminoacyl-tRNA synthetase family. Phe-tRNA synthetase alpha subunit type 1 subfamily. As to quaternary structure, tetramer of two alpha and two beta subunits. Mg(2+) is required as a cofactor.

Its subcellular location is the cytoplasm. It carries out the reaction tRNA(Phe) + L-phenylalanine + ATP = L-phenylalanyl-tRNA(Phe) + AMP + diphosphate + H(+). The polypeptide is Phenylalanine--tRNA ligase alpha subunit (Brucella ovis (strain ATCC 25840 / 63/290 / NCTC 10512)).